We begin with the raw amino-acid sequence, 240 residues long: EF-hand domain-containing protein D1 (240 aa).

Positions 17–54 (EVRAETDQGDPQPAPCDAPAGHPEPEPPARAPTASADS) are disordered. 2 consecutive EF-hand domains span residues 91–126 (RLLKDLEKMFKTYDAGRDGFIDLMELKLMMEKLGAP) and 127–162 (QTHLGLKSMIKEVDEDFDGKLSFREFLLIFHKAAAG). Ca(2+) is bound by residues Asp104, Asp108, Glu115, Asp140, Asp142, Asp144, Lys146, and Glu151.

In terms of tissue distribution, widely expressed. Highest expression in testis, followed by ovary, kidney, cerebrum, cerebellum, heart, liver, and spleen. In the cerebrum and cerebellum, undetectable at embryonic stages, expression increases after birth up to adult stage. In adult CNS, detected in neurons of the cerebellum, cerebrum and hippocampus formation, including dentate gyrus and Cornu Ammonis, but not in the white matter. In the testis, expressed in spermatocytes, but not in spermatogonia nor in interstitial cells. In ovary, found predominantly in mural granulosa cells and those of the cumulus oophorus. In kidney, expressed in collecting ducts, but not in glomeruli. Not detected in skeletal muscle.

It is found in the mitochondrion inner membrane. In terms of biological role, acts as a calcium sensor for mitochondrial flash (mitoflash) activation, an event characterized by stochastic bursts of superoxide production. May play a role in neuronal differentiation. This is EF-hand domain-containing protein D1 (Efhd1) from Mus musculus (Mouse).